The primary structure comprises 29 residues: Cyclotide mden-A (29 aa).

The cyclopeptide (Gly-Asn) cross-link spans 1-29 (GIPTCGETCTLGTCNTPGCTCSWPICTKN). Disulfide bonds link C5-C19, C9-C21, and C14-C26.

This sequence belongs to the cyclotide family. Moebius subfamily. This is a cyclic peptide.

Its function is as follows. Probably participates in a plant defense mechanism. This is Cyclotide mden-A from Melicytus dentatus (Tree violet).